The sequence spans 371 residues: Galanin receptor type 2 (371 aa).

Topologically, residues 1–27 (MNGSDSQGAEDSSQEGGGGWQPEAVLV) are extracellular. An N-linked (GlcNAc...) asparagine glycan is attached at N2. Residues 28-48 (PLFFALIFLVGAVGNALVLAV) form a helical membrane-spanning segment. Topologically, residues 49 to 59 (LLRGGQAVSTT) are cytoplasmic. Residues 60–80 (NLFILNLGVADLCFILCCVPF) traverse the membrane as a helical segment. The Extracellular segment spans residues 81 to 98 (QATIYTLDDWVFGSLLCK). An intrachain disulfide couples C97 to C174. Residues 99–120 (AVHFLIFLTMHASSFTLAAVSL) traverse the membrane as a helical segment. Topologically, residues 121-140 (DRYLAIRYPLHSRELRTPRN) are cytoplasmic. Residues 141–161 (ALAAIGLIWGLALLFSGPYLS) traverse the membrane as a helical segment. Residues 162–186 (YYSQSQLANLTVCHPAWSAPRRRAM) are Extracellular-facing. The helical transmembrane segment at 187-207 (DLCTFVFSYLLPVLVLSLTYA) threads the bilayer. The Cytoplasmic portion of the chain corresponds to 208–236 (RTLHYLWRTVDPVAAGSGSQRAKRKVTRM). Residues 237 to 257 (IVIVAVLFCLCWMPHHALILC) form a helical membrane-spanning segment. Residues 258–259 (VW) lie on the Extracellular side of the membrane. A helical membrane pass occupies residues 260–280 (FGRFPLTRATYALRILSHLVS). Over 281 to 371 (YANSCVNPIV…TLSRTLDPAC (91 aa)) the chain is Cytoplasmic.

Belongs to the G-protein coupled receptor 1 family.

It is found in the cell membrane. Functionally, receptor for the hormone galanin, GALP and spexin-1. The activity of this receptor is mediated by G proteins that activate the phospholipase C/protein kinase C pathway (via G(q)) and that inhibit adenylyl cyclase (via G(i)). The chain is Galanin receptor type 2 (Galr2) from Mus musculus (Mouse).